We begin with the raw amino-acid sequence, 147 residues long: Ribonuclease H (147 aa).

Positions 3–145 (TEDRVEIYTD…ADQLANKGVE (143 aa)) constitute an RNase H type-1 domain. Positions 12, 50, 72, and 137 each coordinate Mg(2+).

The protein belongs to the RNase H family. As to quaternary structure, monomer. Mg(2+) serves as cofactor.

It localises to the cytoplasm. The enzyme catalyses Endonucleolytic cleavage to 5'-phosphomonoester.. Functionally, endonuclease that specifically degrades the RNA of RNA-DNA hybrids. The polypeptide is Ribonuclease H (Chromobacterium violaceum (strain ATCC 12472 / DSM 30191 / JCM 1249 / CCUG 213 / NBRC 12614 / NCIMB 9131 / NCTC 9757 / MK)).